The chain runs to 292 residues: Elongation factor Ts (292 aa).

The tract at residues 79–82 (TDFV) is involved in Mg(2+) ion dislocation from EF-Tu.

It belongs to the EF-Ts family.

Its subcellular location is the cytoplasm. Functionally, associates with the EF-Tu.GDP complex and induces the exchange of GDP to GTP. It remains bound to the aminoacyl-tRNA.EF-Tu.GTP complex up to the GTP hydrolysis stage on the ribosome. This is Elongation factor Ts from Xanthomonas campestris pv. campestris (strain ATCC 33913 / DSM 3586 / NCPPB 528 / LMG 568 / P 25).